We begin with the raw amino-acid sequence, 114 residues long: MNLILLLVIGFLVFIGTYMILSINLIRIVIGISIYTHAGNLIIMSMGTYGSNKSEPLITGGNQLFVDPLLQAIVLTAIVIGFGMTAFLLVLVYRTYKVTKEDEIEGLRGEDDAK.

Transmembrane regions (helical) follow at residues 3 to 23 (LILL…ILSI), 28 to 48 (IVIG…SMGT), and 72 to 92 (AIVL…LVLV).

This sequence belongs to the CPA3 antiporters (TC 2.A.63) subunit C family. May form a heterooligomeric complex that consists of seven subunits: mnhA2, mnhB2, mnhC2, mnhD2, mnhE2, mnhF2 and mnhG2.

Its subcellular location is the cell membrane. The protein is Putative antiporter subunit mnhC2 (mnhC2) of Staphylococcus aureus (strain MRSA252).